A 356-amino-acid polypeptide reads, in one-letter code: Histidinol-phosphate aminotransferase (356 aa).

Residue lysine 210 is modified to N6-(pyridoxal phosphate)lysine.

It belongs to the class-II pyridoxal-phosphate-dependent aminotransferase family. Histidinol-phosphate aminotransferase subfamily. In terms of assembly, homodimer. The cofactor is pyridoxal 5'-phosphate.

It catalyses the reaction L-histidinol phosphate + 2-oxoglutarate = 3-(imidazol-4-yl)-2-oxopropyl phosphate + L-glutamate. It functions in the pathway amino-acid biosynthesis; L-histidine biosynthesis; L-histidine from 5-phospho-alpha-D-ribose 1-diphosphate: step 7/9. The sequence is that of Histidinol-phosphate aminotransferase from Gluconacetobacter diazotrophicus (strain ATCC 49037 / DSM 5601 / CCUG 37298 / CIP 103539 / LMG 7603 / PAl5).